The chain runs to 632 residues: Galactan 5-O-arabinofuranosyltransferase (632 aa).

13 helical membrane-spanning segments follow: residues 10–30 (QIVL…IAIA), 45–65 (ALTT…GGVW), 76–96 (LGGL…PLGA), 162–182 (WAIT…WQMI), 184–204 (FEYA…YSSP), 206–226 (PYAA…WSGL), 242–259 (GWAT…AATW), 263–282 (LLAY…ATAL), 298–318 (LAGI…PFLA), 344–364 (FPML…LWLI), 375–395 (ALMI…LTTL), 409–429 (LTVL…QSLA), and 434–454 (AVLS…SQDI). Topologically, residues 455–632 (PNVLRPDLTI…LAIRKPMGNA (178 aa)) are extracellular.

It belongs to the glycosyltransferase 85 family.

The protein resides in the cell membrane. It catalyses the reaction Adds an alpha-D-arabinofuranosyl group from trans,octacis-decaprenylphospho-beta-D-arabinofuranose at the 5-O-position of the eighth, tenth and twelfth galactofuranose unit of the galactofuranan chain of [beta-D-galactofuranosyl-(1-&gt;5)-beta-D-galactofuranosyl-(1-&gt;6)]14-beta-D-galactofuranosyl-(1-&gt;5)-beta-D-galactofuranosyl-(1-&gt;4)-alpha-L-rhamnopyranosyl-(1-&gt;3)-N-acetyl-alpha-D-glucosaminyl-diphospho-trans,octacis-decaprenol.. It functions in the pathway cell wall biogenesis; cell wall polysaccharide biosynthesis. Its function is as follows. Involved in the biosynthesis of the arabinogalactan (AG) region of the mycolylarabinogalactan-peptidoglycan (mAGP) complex, an essential component of the mycobacterial cell wall. Catalyzes the addition of the first key arabinofuranosyl (Araf) residue from the sugar donor decaprenyl-phospho-arabinose (DPA) on the C-5 of a 6-linked galactofuranosyl (Galf) of the galactan domain, thus 'priming' the galactan for further elaboration by other arabinofuranosyltransferases. The protein is Galactan 5-O-arabinofuranosyltransferase of Mycobacterium leprae (strain TN).